The primary structure comprises 235 residues: Eukaryotic translation initiation factor 4E-1 (235 aa).

The span at 16 to 25 (VNKHRGVRSD) shows a compositional bias: basic and acidic residues. The tract at residues 16 to 56 (VNKHRGVRSDGEEDEQLEEGEIVGGDADTLSSSSSSRPGTA) is disordered. The span at 26–36 (GEEDEQLEEGE) shows a compositional bias: acidic residues. 2 EIF4G-binding regions span residues 60–63 (HPLE) and 70–106 (FDTP…NNIH). Residues 78 to 83 (KQVAWG), lysine 110, and 128 to 129 (WE) each bind mRNA. Cysteine 133 and cysteine 171 are disulfide-bonded. The segment at 154-163 (YTLLAMIGEQ) is EIF4G-binding. MRNA-binding positions include 178-183 (RARQEK) and 223-227 (KTLDR).

This sequence belongs to the eukaryotic initiation factor 4E family. As to quaternary structure, EIF4F is a multi-subunit complex, the composition of which varies with external and internal environmental conditions. It is composed of at least EIF4A, EIF4E and EIF4G. EIF4E is also known to interact with other partners. In higher plants two isoforms of EIF4F have been identified, named isoform EIF4F and isoform EIF(iso)4F. Isoform EIF4F has subunits p220 and p26, whereas isoform EIF(iso)4F has subunits p82 and p28. (Microbial infection) Interacts with potyvirus viral genome-linked protein (VPg); this interaction is possible in susceptible hosts but impaired in resistant plants. Post-translationally, according to the redox status, the Cys-133-Cys-171 disulfide bridge may have a role in regulating protein function by affecting its ability to bind capped mRNA.

It is found in the nucleus. The protein resides in the cytoplasm. Component of the protein complex eIF4F, which is involved in the recognition of the mRNA cap, ATP-dependent unwinding of 5'-terminal secondary structure and recruitment of mRNA to the ribosome. Recognizes and binds the 7-methylguanosine-containing mRNA cap during an early step in the initiation of protein synthesis and facilitates ribosome binding by inducing the unwinding of the mRNAs secondary structures. Key component of recessive resistance to potyviruses. In terms of biological role, (Microbial infection) Susceptibility host factor required for viral infection by recruiting viral RNAs to the host ribosomal complex via an interaction with viral genome-linked protein (VPg). The polypeptide is Eukaryotic translation initiation factor 4E-1 (Lactuca sativa (Garden lettuce)).